A 755-amino-acid polypeptide reads, in one-letter code: Putative two-component response regulator-like APRR6 (755 aa).

The region spanning 14–128 (SILLIDHDTA…DIKNMWQHVF (115 aa)) is the Response regulatory domain.

This sequence belongs to the ARR-like family.

It localises to the nucleus. This chain is Putative two-component response regulator-like APRR6 (APRR6), found in Arabidopsis thaliana (Mouse-ear cress).